The following is a 336-amino-acid chain: 4-hydroxythreonine-4-phosphate dehydrogenase (336 aa).

Residues histidine 135 and threonine 136 each contribute to the substrate site. A divalent metal cation contacts are provided by histidine 165, histidine 210, and histidine 265. Residues lysine 273, asparagine 282, and arginine 291 each coordinate substrate.

The protein belongs to the PdxA family. In terms of assembly, homodimer. It depends on Zn(2+) as a cofactor. Mg(2+) serves as cofactor. The cofactor is Co(2+).

The protein resides in the cytoplasm. It catalyses the reaction 4-(phosphooxy)-L-threonine + NAD(+) = 3-amino-2-oxopropyl phosphate + CO2 + NADH. It functions in the pathway cofactor biosynthesis; pyridoxine 5'-phosphate biosynthesis; pyridoxine 5'-phosphate from D-erythrose 4-phosphate: step 4/5. In terms of biological role, catalyzes the NAD(P)-dependent oxidation of 4-(phosphooxy)-L-threonine (HTP) into 2-amino-3-oxo-4-(phosphooxy)butyric acid which spontaneously decarboxylates to form 3-amino-2-oxopropyl phosphate (AHAP). This Marinobacter nauticus (strain ATCC 700491 / DSM 11845 / VT8) (Marinobacter aquaeolei) protein is 4-hydroxythreonine-4-phosphate dehydrogenase.